The chain runs to 98 residues: MSLVHMNILLAFTMSLTGLLMYRSHLMSALLCLEGMMLSLFILMTITILNMHFTLASMTPIILLVFAACEAAVGLALLVKISNTYGTDHVQNLNLLQC.

The next 3 membrane-spanning stretches (helical) occupy residues 1 to 21, 29 to 49, and 59 to 79; these read MSLV…GLLM, ALLC…ITIL, and TPII…ALLV.

The protein belongs to the complex I subunit 4L family. Core subunit of respiratory chain NADH dehydrogenase (Complex I) which is composed of 45 different subunits.

Its subcellular location is the mitochondrion inner membrane. It carries out the reaction a ubiquinone + NADH + 5 H(+)(in) = a ubiquinol + NAD(+) + 4 H(+)(out). In terms of biological role, core subunit of the mitochondrial membrane respiratory chain NADH dehydrogenase (Complex I) which catalyzes electron transfer from NADH through the respiratory chain, using ubiquinone as an electron acceptor. Part of the enzyme membrane arm which is embedded in the lipid bilayer and involved in proton translocation. This is NADH-ubiquinone oxidoreductase chain 4L (MT-ND4L) from Lipotes vexillifer (Yangtze river dolphin).